The chain runs to 491 residues: uncharacterized protein (491 aa).

Position 99 (tryptophan 99) interacts with substrate. Asparagine 137 provides a ligand contact to Ca(2+). Histidine 138 is a substrate binding site. 2 residues coordinate Ca(2+): glutamate 177 and aspartate 190. Residue arginine 219 participates in substrate binding. Ca(2+) is bound by residues aspartate 221, histidine 225, and glutamate 245. Residue aspartate 221 is the Nucleophile of the active site. 224 to 225 serves as a coordination point for substrate; the sequence is KH. Catalysis depends on glutamate 245, which acts as the Proton donor. Substrate-binding residues include glycine 249, histidine 312, and arginine 360.

This sequence belongs to the glycosyl hydrolase 13 family. Requires Ca(2+) as cofactor.

It localises to the cytoplasm. The protein localises to the nucleus. This is an uncharacterized protein from Schizosaccharomyces pombe (strain 972 / ATCC 24843) (Fission yeast).